A 78-amino-acid chain; its full sequence is Large ribosomal subunit protein uL29 (78 aa).

The protein belongs to the universal ribosomal protein uL29 family.

The sequence is that of Large ribosomal subunit protein uL29 from Rippkaea orientalis (strain PCC 8801 / RF-1) (Cyanothece sp. (strain PCC 8801)).